We begin with the raw amino-acid sequence, 64 residues long: Conotoxin Tx3.5-a (64 aa).

Positions 1–19 are cleaved as a signal peptide; that stretch reads MSKLGVLLTICLLLFPLTA. Positions 20–47 are excised as a propeptide; sequence LPLDGDQPADQAAERMQAEQHPLFDQKR. Intrachain disulfides connect Cys-49-Cys-58, Cys-50-Cys-62, and Cys-54-Cys-63. The residue at position 63 (Cys-63) is a Cysteine amide.

The protein belongs to the conotoxin M superfamily. Post-translationally, contains 3 disulfide bonds. Two peptides are produced from this precursor. Conotoxin Tx3.5-b is amidated at Cys-63, conotoxin Tx3.5-a has an unmodified C-terminus. Expressed by the venom duct. Is present in all duct parts with a highest content in part 2 (proximal of the venom bulb) and then decreases in concentration toward the end of the duct.

Its subcellular location is the secreted. This Conus textile (Cloth-of-gold cone) protein is Conotoxin Tx3.5-a.